The sequence spans 222 residues: 2-hydroxy-3-keto-5-methylthiopentenyl-1-phosphate phosphatase (222 aa).

The protein belongs to the HAD-like hydrolase superfamily. MtnX family.

It carries out the reaction 2-hydroxy-5-methylsulfanyl-3-oxopent-1-enyl phosphate + H2O = 1,2-dihydroxy-5-(methylsulfanyl)pent-1-en-3-one + phosphate. It functions in the pathway amino-acid biosynthesis; L-methionine biosynthesis via salvage pathway; L-methionine from S-methyl-5-thio-alpha-D-ribose 1-phosphate: step 4/6. In terms of biological role, dephosphorylates 2-hydroxy-3-keto-5-methylthiopentenyl-1-phosphate (HK-MTPenyl-1-P) yielding 1,2-dihydroxy-3-keto-5-methylthiopentene (DHK-MTPene). In Brevibacillus brevis (strain 47 / JCM 6285 / NBRC 100599), this protein is 2-hydroxy-3-keto-5-methylthiopentenyl-1-phosphate phosphatase.